Reading from the N-terminus, the 1077-residue chain is Rap guanine nucleotide exchange factor 1 (1077 aa).

Leucine 57 participates in a covalent cross-link: Glycyl lysine isopeptide (Lys-Gly) (interchain with G-Cter in SUMO2). 2 disordered regions span residues 207–235 (IEKQGRPSPTSPVKPSSPASKPDGPAELP) and 248–300 (TGMS…PTRV). Low complexity predominate over residues 213–228 (PSPTSPVKPSSPASKP). A phosphoserine mark is found at serine 281, serine 293, serine 314, serine 335, and serine 360. An SH3-binding motif is present at residues 281-292 (SPPPALPPKKRQ). 2 disordered regions span residues 336–376 (GGSH…QCSR) and 411–494 (LSPL…EDLQ). Basic and acidic residues predominate over residues 358 to 371 (SKSDEQLSSLDRDS). The SH3-binding signature appears at 451-462 (DTPPALPEKKRR). Residues 484–494 (QYDNISGEDLQ) show a composition bias toward polar residues. The residue at position 504 (tyrosine 504) is a Phosphotyrosine; by HCK. 2 consecutive short sequence motifs (SH3-binding) follow at residues 538–549 (EKPPPLPEKKNK) and 606–617 (APPPALPPKQRQ). The tract at residues 600–670 (DSVQELAPPP…SEEEVDELSL (71 aa)) is disordered. Residues 640–651 (KDSRDGSERAPK) show a composition bias toward basic and acidic residues. Acidic residues predominate over residues 660–669 (QSEEEVDELS). One can recognise an N-terminal Ras-GEF domain in the interval 688–810 (DGPDVRGGSG…LRKNILDKVD (123 aa)). Residues 840 to 1064 (HSHEIAEQLT…WELSLKIKPR (225 aa)) form the Ras-GEF domain.

As to quaternary structure, interacts with HCK (via SH3-binding sites). Interacts with CRK (via SH3-binding sites). Phosphorylation at Tyr-504 enhances activity as Rap guanine nucleotide exchange factor. As to expression, ubiquitously expressed in adult and fetus. Expression is high in adult skeletal muscle and placenta and in fetal brain and heart. Low levels of expression in adult and fetal liver.

Its subcellular location is the early endosome. Functionally, guanine nucleotide-releasing protein that binds to SH3 domain of CRK and GRB2/ASH. Transduces signals from CRK to activate RAS. Involved in cell branching and adhesion mediated by BCAR1-CRK-RAPGEF1 signaling and activation of RAP1. Plays a role in the establishment of basal endothelial barrier function. Plays a role in nerve growth factor (NGF)-induced sustained activation of Rap1 and neurite outgrowth. The sequence is that of Rap guanine nucleotide exchange factor 1 (RAPGEF1) from Homo sapiens (Human).